We begin with the raw amino-acid sequence, 35 residues long: Mu-theraphotoxin-Ca2a (35 aa).

Cystine bridges form between Cys-2–Cys-17, Cys-9–Cys-24, and Cys-16–Cys-31.

Belongs to the neurotoxin 10 (Hwtx-1) family. 10 (haplotoxin-1) subfamily. Expressed by the venom gland.

Its subcellular location is the secreted. Functionally, potently inhibits Nav1.7/SCN9A (IC(50)=98.1 nM), and moderately inhibits Nav1.2/SCN2A (IC(50)=216.3 nM), Nav1.6/SCN8A (IC(50)=313.6 nM), and Nav1.3/SCN3A (IC(50)=491.3 nM). Hyperpolarizes the slow inactivation, but does not alter the voltage-dependent activation or fast inactivation of Nav1.7/SCN9A. Binds with Nav1.7/SCN9A at the extracellular S3-S4 linker of domain II (site 4). In vivo, exhibits dose-dependent analgesic efficacy by reducing pain responses in rodent models of formalin-induced paw licking, hot plate test, and acetic acid-induced writhing. This chain is Mu-theraphotoxin-Ca2a, found in Cyriopagopus albostriatus (Cambodian tiger tarantula).